The chain runs to 562 residues: Arginine--tRNA ligase (562 aa).

The 'HIGH' region signature appears at 121–131 (PNIAKPFSVGH).

Belongs to the class-I aminoacyl-tRNA synthetase family. Monomer.

It localises to the cytoplasm. The catalysed reaction is tRNA(Arg) + L-arginine + ATP = L-arginyl-tRNA(Arg) + AMP + diphosphate. In Streptococcus suis (strain 98HAH33), this protein is Arginine--tRNA ligase.